The chain runs to 213 residues: Iron sulfur cluster assembly protein 1, mitochondrial (213 aa).

This sequence belongs to the NifU family. As to quaternary structure, component of the core Fe-S cluster (ISC) assembly machinery. Requires [2Fe-2S] cluster as cofactor.

The protein localises to the mitochondrion matrix. It functions in the pathway cofactor biosynthesis; iron-sulfur cluster biosynthesis. Scaffold protein for the de novo synthesis of iron-sulfur (Fe-S) clusters within mitochondria, which is required for maturation of both mitochondrial and cytoplasmic [2Fe-2S] and [4Fe-4S] proteins. First, a [2Fe-2S] cluster is transiently assembled on the scaffold protein ISU1. In a second step, the cluster is released from ISU1, transferred to a glutaredoxin, followed by the formation of mitochondrial [2Fe-2S] proteins, the synthesis of [4Fe-4S] clusters and their target-specific insertion into the recipient apoproteins. Cluster assembly on ISU1 depends on the function of the cysteine desulfurase complex NFS1-ISD11, which serves as the sulfur donor for cluster synthesis, the iron-binding protein frataxin as the putative iron donor, and the electron transfer chain comprised of ferredoxin reductase and ferredoxin, which receive their electrons from NADH. This Candida glabrata (strain ATCC 2001 / BCRC 20586 / JCM 3761 / NBRC 0622 / NRRL Y-65 / CBS 138) (Yeast) protein is Iron sulfur cluster assembly protein 1, mitochondrial (ISU1).